The following is a 102-amino-acid chain: Signal recognition particle 19 kDa protein (102 aa).

This sequence belongs to the SRP19 family. In terms of assembly, part of the signal recognition particle protein translocation system, which is composed of SRP and FtsY. Archaeal SRP consists of a 7S RNA molecule of 300 nucleotides and two protein subunits: SRP54 and SRP19.

It localises to the cytoplasm. Involved in targeting and insertion of nascent membrane proteins into the cytoplasmic membrane. Binds directly to 7S RNA and mediates binding of the 54 kDa subunit of the SRP. In Saccharolobus solfataricus (strain ATCC 35092 / DSM 1617 / JCM 11322 / P2) (Sulfolobus solfataricus), this protein is Signal recognition particle 19 kDa protein.